The chain runs to 978 residues: NACHT, LRR and PYD domains-containing protein 4E (978 aa).

In terms of domain architecture, Pyrin spans 1–93 (MASFFSDFGL…MERAGREIAG (93 aa)). The region spanning 148–471 (HMVFLQGVAG…FHLLKSHVDH (324 aa)) is the NACHT domain. An ATP-binding site is contributed by 154–161 (GVAGIGKS). LRR repeat units follow at residues 594–617 (CSTL…HSYT), 694–717 (LLNL…LNQA), 746–773 (SKML…LCHP), 802–825 (NKTL…VLCG), 859–882 (NQNL…LLCD), and 916–940 (CKTL…LFEA).

This sequence belongs to the NLRP family.

May be involved in inflammation and recognition of cytosolic pathogen-associated molecular patterns (PAMPs) not intercepted by membrane-bound receptors. The protein is NACHT, LRR and PYD domains-containing protein 4E (Nlrp4e) of Mus musculus (Mouse).